Here is a 332-residue protein sequence, read N- to C-terminus: Galactinol synthase 7 (332 aa).

Residue Lys-101 is part of the active site. 3 residues coordinate Mn(2+): Asp-117, Asp-119, and His-255.

Belongs to the glycosyltransferase 8 family. Galactosyltransferase subfamily. It depends on a divalent metal cation as a cofactor.

It is found in the cytoplasm. It catalyses the reaction myo-inositol + UDP-alpha-D-galactose = alpha-D-galactosyl-(1-&gt;3)-1D-myo-inositol + UDP + H(+). Galactinol synthase involved in the biosynthesis of raffinose family oligosaccharides (RFOs) that function as osmoprotectants. May promote plant stress tolerance. This Arabidopsis thaliana (Mouse-ear cress) protein is Galactinol synthase 7 (GOLS7).